Reading from the N-terminus, the 241-residue chain is Small ribosomal subunit protein uS3 (241 aa).

The KH type-2 domain maps to 39-107; it reads IREVLMKNLK…EVVINIVEVR (69 aa). The disordered stretch occupies residues 219–241; it reads MAELDHAGGGGGGERRRRERDAA. The span at 231-241 shows a compositional bias: basic and acidic residues; it reads GERRRRERDAA.

The protein belongs to the universal ribosomal protein uS3 family. As to quaternary structure, part of the 30S ribosomal subunit. Forms a tight complex with proteins S10 and S14.

In terms of biological role, binds the lower part of the 30S subunit head. Binds mRNA in the 70S ribosome, positioning it for translation. The polypeptide is Small ribosomal subunit protein uS3 (Beijerinckia indica subsp. indica (strain ATCC 9039 / DSM 1715 / NCIMB 8712)).